Here is a 462-residue protein sequence, read N- to C-terminus: G-patch domain and KOW motifs-containing protein homolog 1 (462 aa).

Disordered regions lie at residues 1 to 26 (MVEQTTSEPAAGSMPKISFGVKKREE) and 182 to 218 (LKLPNRRPPGLGLGATPKNPVGKNKNTGESSKAEEEK). In terms of domain architecture, G-patch spans 154–202 (IESFGLAILRGCNWKDGDGIGKNPQKVALKLPNRRPPGLGLGATPKNPV). A KOW 1 domain is found at 221–248 (EIKVGSFIKVVDGRNKGVYGKVEGRDDD). Residues 289–305 (EYDKEKDRLETERKKLE) show a composition bias toward basic and acidic residues. The interval 289 to 337 (EYDKEKDRLETERKKLESQPPSTSTSQSSKDYKSKSSSSKHDKNSSEYE) is disordered. A compositionally biased stretch (low complexity) spans 306–317 (SQPPSTSTSQSS). Basic and acidic residues predominate over residues 318-337 (KDYKSKSSSSKHDKNSSEYE). In terms of domain architecture, KOW 2 spans 401–428 (PREIGEKLMIVAGKRSGQLAVMLDKDKR).

This sequence belongs to the MOS2 family.

The protein resides in the nucleus. The chain is G-patch domain and KOW motifs-containing protein homolog 1 from Caenorhabditis elegans.